We begin with the raw amino-acid sequence, 437 residues long: Protein translocase subunit SecY (437 aa).

A run of 10 helical transmembrane segments spans residues 23–43, 77–97, 125–145, 154–174, 183–203, 217–237, 271–291, 315–335, 367–387, and 395–415; these read IVFL…PIPG, IFAL…LLTL, LILA…IAGI, FYFY…LMWL, IGNG…PSAI, ILLF…VVFM, MAGV…ATII, YLIL…GLVF, IMLR…LIPE, and VPFY…IDFI.

It belongs to the SecY/SEC61-alpha family. Component of the Sec protein translocase complex. Heterotrimer consisting of SecY, SecE and SecG subunits. The heterotrimers can form oligomers, although 1 heterotrimer is thought to be able to translocate proteins. Interacts with the ribosome. Interacts with SecDF, and other proteins may be involved. Interacts with SecA.

It is found in the cell membrane. Its function is as follows. The central subunit of the protein translocation channel SecYEG. Consists of two halves formed by TMs 1-5 and 6-10. These two domains form a lateral gate at the front which open onto the bilayer between TMs 2 and 7, and are clamped together by SecE at the back. The channel is closed by both a pore ring composed of hydrophobic SecY resides and a short helix (helix 2A) on the extracellular side of the membrane which forms a plug. The plug probably moves laterally to allow the channel to open. The ring and the pore may move independently. This chain is Protein translocase subunit SecY, found in Buchnera aphidicola subsp. Acyrthosiphon pisum (strain APS) (Acyrthosiphon pisum symbiotic bacterium).